Consider the following 321-residue polypeptide: Fibronectin type III domain-containing protein 8 (321 aa).

The Fibronectin type-III domain occupies 175–277 (VPEVPFICEH…KPYKFATVST (103 aa)).

This Mus musculus (Mouse) protein is Fibronectin type III domain-containing protein 8 (Fndc8).